The following is a 558-amino-acid chain: Dihydroxy-acid dehydratase (558 aa).

Cys-49 lines the [2Fe-2S] cluster pocket. A Mg(2+)-binding site is contributed by Asp-81. A [2Fe-2S] cluster-binding site is contributed by Cys-122. 2 residues coordinate Mg(2+): Asp-123 and Lys-124. Position 124 is an N6-carboxylysine (Lys-124). Cys-194 serves as a coordination point for [2Fe-2S] cluster. Residue Glu-446 coordinates Mg(2+). Ser-472 acts as the Proton acceptor in catalysis.

This sequence belongs to the IlvD/Edd family. Homodimer. Requires [2Fe-2S] cluster as cofactor. Mg(2+) serves as cofactor.

The enzyme catalyses (2R)-2,3-dihydroxy-3-methylbutanoate = 3-methyl-2-oxobutanoate + H2O. The catalysed reaction is (2R,3R)-2,3-dihydroxy-3-methylpentanoate = (S)-3-methyl-2-oxopentanoate + H2O. Its pathway is amino-acid biosynthesis; L-isoleucine biosynthesis; L-isoleucine from 2-oxobutanoate: step 3/4. It participates in amino-acid biosynthesis; L-valine biosynthesis; L-valine from pyruvate: step 3/4. Functions in the biosynthesis of branched-chain amino acids. Catalyzes the dehydration of (2R,3R)-2,3-dihydroxy-3-methylpentanoate (2,3-dihydroxy-3-methylvalerate) into 2-oxo-3-methylpentanoate (2-oxo-3-methylvalerate) and of (2R)-2,3-dihydroxy-3-methylbutanoate (2,3-dihydroxyisovalerate) into 2-oxo-3-methylbutanoate (2-oxoisovalerate), the penultimate precursor to L-isoleucine and L-valine, respectively. The chain is Dihydroxy-acid dehydratase from Synechococcus sp. (strain RCC307).